A 329-amino-acid polypeptide reads, in one-letter code: MLIPPFILWDVGYSVYTYGSIFIIALIIWQVKRSHRGLRMGPTKSCAKCFRRIKQTPSDRATRAKRTSKEEAEKLQKLLDTMKSQGWLPQEGSVRRLLCPDPSCSICNAMTLEIQQLLGVENKKTSSSLLRPSRSFSCLEALSPSKSLADRSSELTYQDTRDVSLSSRFPQSQETDQQSTRSATPSIGDAVLQCYHSAPQQQLDPQGSKMTQDAKGLSSSSTDEPGVPANQQKKRKKTKKLALKNQAAPTEVETENKMTFFSHWVNPEVKCDRQEESLVFSKYDTGAKPMTVEPEKTHSPVRDQAEGAEKKKKPECDLKAKPLRAKRNI.

The helical transmembrane segment at 11–31 (VGYSVYTYGSIFIIALIIWQV) threads the bilayer. The stretch at 58 to 85 (SDRATRAKRTSKEEAEKLQKLLDTMKSQ) forms a coiled coil. Disordered regions lie at residues 149–184 (ADRS…RSAT), 201–250 (QQLD…AAPT), and 288–329 (KPMT…KRNI). Residues S152 and S153 each carry the phosphoserine modification. Polar residues-rich tracts occupy residues 154–184 (ELTY…RSAT) and 201–223 (QQLD…SSTD). Over residues 232–242 (QKKRKKTKKLA) the composition is skewed to basic residues. Over residues 293–320 (EPEKTHSPVRDQAEGAEKKKKPECDLKA) the composition is skewed to basic and acidic residues.

This sequence belongs to the SPATA31 family.

The protein resides in the membrane. The chain is Protein SPATA31F3 from Rattus norvegicus (Rat).